A 181-amino-acid polypeptide reads, in one-letter code: Transmembrane protein 47 (181 aa).

Alanine 2 carries the N-acetylalanine modification. The next 4 helical transmembrane spans lie at leucine 21–proline 41, alanine 83–isoleucine 103, valine 115–isoleucine 135, and glycine 152–leucine 172.

The protein belongs to the TMEM47 family. Interacts with CTNNB1, CTNNA1, PRKCI, PARD6B, FYB1. As to expression, expressed in adult brain, fetal brain, cerebellum, heart, lung, prostate and thyroid.

It localises to the membrane. Its subcellular location is the cell junction. It is found in the adherens junction. Regulates cell junction organization in epithelial cells. May play a role in the transition from adherens junction to tight junction assembly. May regulate F-actin polymerization required for tight junctional localization dynamics and affect the junctional localization of PARD6B. During podocyte differentiation may negatively regulate activity of FYN and subsequently the abundance of nephrin. This chain is Transmembrane protein 47 (TMEM47), found in Homo sapiens (Human).